A 380-amino-acid chain; its full sequence is MAPNLRKSHPLLKMINKSLIDLPTPPNISAWWNFGSLLGICLITQILTGLLLAMHYTADTTLAFSSIAHTCRNVQYGWLIRNLHANGASFFFICIYFHIGRGLYYGSYLYKETWNTGIILLLTLMATAFVGYVLPWGQMSFWGATVITNLFSAIPYVGQTLVEWAWGGFSVDNPTLTRFFALHFLLPFMITGLTLIHLTFLHESGSNNPLGIVANSDKIPFHPYYSTKDILGFALMLLPLTTLALFSPNLLGDPENFTPANPLVTPPHIKPEWYFLFAYAILRSIPNKLGGVLALAASVLILFLSPLLHKSKQRTMAFRPLSQLLFWTLVANLLILTWIGSQPVEHPFIIIGQLASTTYFIILLILFPITSALENKMLNF.

4 helical membrane passes run Phe34–Met54, Trp78–Ile99, Trp114–Leu134, and Phe179–Thr199. Heme b is bound by residues His84 and His98. Heme b-binding residues include His183 and His197. Residue His202 coordinates a ubiquinone. The next 4 helical transmembrane spans lie at Thr227–Ser247, Leu289–His309, Leu321–Ser341, and Phe348–Pro368.

This sequence belongs to the cytochrome b family. As to quaternary structure, the cytochrome bc1 complex contains 11 subunits: 3 respiratory subunits (MT-CYB, CYC1 and UQCRFS1), 2 core proteins (UQCRC1 and UQCRC2) and 6 low-molecular weight proteins (UQCRH/QCR6, UQCRB/QCR7, UQCRQ/QCR8, UQCR10/QCR9, UQCR11/QCR10 and a cleavage product of UQCRFS1). This cytochrome bc1 complex then forms a dimer. Heme b serves as cofactor.

It is found in the mitochondrion inner membrane. Functionally, component of the ubiquinol-cytochrome c reductase complex (complex III or cytochrome b-c1 complex) that is part of the mitochondrial respiratory chain. The b-c1 complex mediates electron transfer from ubiquinol to cytochrome c. Contributes to the generation of a proton gradient across the mitochondrial membrane that is then used for ATP synthesis. The protein is Cytochrome b (MT-CYB) of Pygoscelis papua (Gentoo penguin).